Reading from the N-terminus, the 1024-residue chain is Beta-galactosidase (1024 aa).

Substrate is bound by residues Asn103 and Asp202. Asp202 contacts Na(+). Residues Glu417, His419, and Glu462 each coordinate Mg(2+). Substrate contacts are provided by residues Glu462 and 538 to 541 (EYAH). The active-site Proton donor is Glu462. Glu538 serves as the catalytic Nucleophile. A Mg(2+)-binding site is contributed by Asn598. 2 residues coordinate Na(+): Phe602 and Asn605. 2 residues coordinate substrate: Asn605 and Trp1000.

The protein belongs to the glycosyl hydrolase 2 family. In terms of assembly, homotetramer. It depends on Mg(2+) as a cofactor. Na(+) is required as a cofactor.

It carries out the reaction Hydrolysis of terminal non-reducing beta-D-galactose residues in beta-D-galactosides.. In Shigella sonnei (strain Ss046), this protein is Beta-galactosidase.